The following is a 637-amino-acid chain: MSDWSINDARTGYNVNYWSQGLYGISDTGEVTVSPDPSHPEYSIGLNELAKDMVKSGVALPVLIRFPQILHHRVNSVCQAFNQAIQKYEYQSDYLLVYPIKVNQQQTVVEEILASQVSKEVPQLGLEAGSKPELMAVLAMAQKASSVIICNGYKDVEYIRLALIGEKLGHKVYIVLEKLSELKIILEEAEKLGVTPRLGCRVRLAFQGKGKWQASGGEKSKFGLSASQVLTVIDSLKQSQMLDSLQLLHFHLGSQIANIRDIRQGVSEAGRFYCELQKLGANVKCFDVGGGLAVDYDGTRSQSSSSMNYGLTEYANNIVSVLTDLCNEYKEPMPRIISESGRFLTAHHAVLITDVIGTEAYKPEVIEEPETEAPQLLHNMWQSWSEVSGRADQRALIEIYHDCQSDLSEVHSLFALGQLSLSERAWAEQVNLRVCHELRDVMSPKYRFHRPIIDELNEKLADKFFVNFSLFQSLPDAWGIDQVFPIMPLSGLDKAPERRAVMLDITCDSDGTIDQYVDGQGIETTIPVPTWSAESPYLIGFFLVGAYQEILGDMHNLFGDTNSAVVRLDDDGRTNIESVLAGDTVADVLRYVNLDAVSFMRTYEELVNKHIQEAERANILEELQLGLKGYTYLEDFS.

At Lys101 the chain carries N6-(pyridoxal phosphate)lysine. 286 to 296 lines the substrate pocket; sequence FDVGGGLAVDY.

Belongs to the Orn/Lys/Arg decarboxylase class-II family. SpeA subfamily. Mg(2+) is required as a cofactor. The cofactor is pyridoxal 5'-phosphate.

The catalysed reaction is L-arginine + H(+) = agmatine + CO2. Its pathway is amine and polyamine biosynthesis; agmatine biosynthesis; agmatine from L-arginine: step 1/1. Catalyzes the biosynthesis of agmatine from arginine. The sequence is that of Biosynthetic arginine decarboxylase from Shewanella sediminis (strain HAW-EB3).